A 121-amino-acid polypeptide reads, in one-letter code: Ribonuclease P protein component (121 aa).

Belongs to the RnpA family. In terms of assembly, consists of a catalytic RNA component (M1 or rnpB) and a protein subunit.

It carries out the reaction Endonucleolytic cleavage of RNA, removing 5'-extranucleotides from tRNA precursor.. In terms of biological role, RNaseP catalyzes the removal of the 5'-leader sequence from pre-tRNA to produce the mature 5'-terminus. It can also cleave other RNA substrates such as 4.5S RNA. The protein component plays an auxiliary but essential role in vivo by binding to the 5'-leader sequence and broadening the substrate specificity of the ribozyme. This chain is Ribonuclease P protein component, found in Alcanivorax borkumensis (strain ATCC 700651 / DSM 11573 / NCIMB 13689 / SK2).